We begin with the raw amino-acid sequence, 200 residues long: Gamma-glutamyl-CDP-amidate hydrolase (200 aa).

Residues 20-200 (ECLALDWGKL…LKEWFSLIKE (181 aa)) form the Glutamine amidotransferase type-1 domain. The active-site Nucleophile is the C101. Catalysis depends on residues H178 and E180.

It carries out the reaction N(5)-(cytidine 5'-diphosphoramidyl)-L-glutamine + H2O = cytidine 5'-diphosphoramidate + L-glutamate + H(+). It participates in capsule biogenesis; capsule polysaccharide biosynthesis. In terms of biological role, involved in the biosynthesis of the O-methyl phosphoramidate (MeOPN) group found on the capsular polysaccharide (CPS) of C.jejuni. Catalyzes the hydrolysis of CDP-L-glutamine to L-glutamate and cytidine diphosphoramidate. The sequence is that of Gamma-glutamyl-CDP-amidate hydrolase from Campylobacter jejuni subsp. jejuni serotype O:2 (strain ATCC 700819 / NCTC 11168).